We begin with the raw amino-acid sequence, 535 residues long: CTP synthase (535 aa).

Residues 1–268 (MSTKYIFVTG…DQIVCDHLKL (268 aa)) are amidoligase domain. Residue Ser14 coordinates CTP. Residue Ser14 participates in UTP binding. An ATP-binding site is contributed by 15–20 (SMGKGI). Tyr55 serves as a coordination point for L-glutamine. Asp72 contacts ATP. Mg(2+) contacts are provided by Asp72 and Glu142. CTP is bound by residues 149–151 (DME), 189–194 (KTKIAQ), and Lys225. UTP-binding positions include 189-194 (KTKIAQ) and Lys225. Val243 lines the ATP pocket. Positions 293–535 (KIALVGKYVE…FIRVAVENSK (243 aa)) constitute a Glutamine amidotransferase type-1 domain. Gly355 contributes to the L-glutamine binding site. Residue Cys382 is the Nucleophile; for glutamine hydrolysis of the active site. L-glutamine is bound by residues 383–386 (LGMQ), Glu406, and Arg464. Residues His509 and Glu511 contribute to the active site.

It belongs to the CTP synthase family. Homotetramer. In contrast to E.coli CTP synthase, remains a tetramer at dilute enzyme concentrations even in the absence of Mg(2+), ATP and UTP.

It carries out the reaction UTP + L-glutamine + ATP + H2O = CTP + L-glutamate + ADP + phosphate + 2 H(+). The catalysed reaction is L-glutamine + H2O = L-glutamate + NH4(+). It catalyses the reaction UTP + NH4(+) + ATP = CTP + ADP + phosphate + 2 H(+). It participates in pyrimidine metabolism; CTP biosynthesis via de novo pathway; CTP from UDP: step 2/2. Allosterically activated by GTP, when glutamine is the substrate. GTP has no effect on the reaction when ammonia is the substrate. The allosteric effector GTP functions by stabilizing the protein conformation that binds the tetrahedral intermediate(s) formed during glutamine hydrolysis. Also activated by magnesium. Allosterically inhibited by CTP. Its function is as follows. Catalyzes the ATP-dependent amination of UTP to CTP with either L-glutamine or ammonia as the source of nitrogen. Is essential for the synthesis of CTP de novo. Contrary to other bacterial CTP synthases, the lactococcal enzyme is also able to convert dUTP to dCTP, but this reaction may not play a significant physiological role. Regulates intracellular CTP levels through interactions with the four ribonucleotide triphosphates. This Lactococcus lactis subsp. cremoris (strain MG1363) protein is CTP synthase.